A 1781-amino-acid polypeptide reads, in one-letter code: Chitin synthase 7 (1781 aa).

Residues Asn133, Asn534, Asn629, Asn644, Asn655, and Asn660 are each glycosylated (N-linked (GlcNAc...) asparagine). Helical transmembrane passes span 741-761 (AWVA…LKFV) and 777-797 (LVLF…IIGF). N-linked (GlcNAc...) asparagine glycans are attached at residues Asn889 and Asn1011. A helical transmembrane segment spans residues 1048–1068 (LLLAFAIIICIVTAVKFLAAL). Asn1413 carries N-linked (GlcNAc...) asparagine glycosylation. Helical transmembrane passes span 1444–1464 (LTGT…IYVL), 1471–1491 (IPYI…LIFI), and 1499–1519 (IGWM…LPLY). N-linked (GlcNAc...) asparagine glycosylation occurs at Asn1526. The segment at 1677-1712 (QANLSPAAGGGHSRSGTALGFSSGSRSPMPDAMRSQ) is disordered. Over residues 1690-1702 (RSGTALGFSSGSR) the composition is skewed to polar residues. Residues 1723-1779 (GPTDMAIVESIRSVLCEVDLDTVTKKQVRALVEQRLQTELVGERRTFMDRQIDHELE) form the DEK-C domain.

It belongs to the chitin synthase family. Class V subfamily.

It is found in the cell membrane. It carries out the reaction [(1-&gt;4)-N-acetyl-beta-D-glucosaminyl](n) + UDP-N-acetyl-alpha-D-glucosamine = [(1-&gt;4)-N-acetyl-beta-D-glucosaminyl](n+1) + UDP + H(+). In terms of biological role, polymerizes chitin, a structural polymer of the cell wall and septum, by transferring the sugar moiety of UDP-GlcNAc to the non-reducing end of the growing chitin polymer. Shows additive effects in septum formation with CHS1, CHS2, CHS3A, CHS4, CHS5 and CHS6. Indispensable for perithecia formation and regulates conidiation. Plays an important role in the response to cell wall stress. Also required for hyphal growth and pathogenicity. In Gibberella zeae (strain ATCC MYA-4620 / CBS 123657 / FGSC 9075 / NRRL 31084 / PH-1) (Wheat head blight fungus), this protein is Chitin synthase 7.